An 883-amino-acid polypeptide reads, in one-letter code: MRVFPIPLLSHVRGLIRQGPSSRFYVVPALARTNLTISHSEQVKEGTFDYKALELNDIGVLRVLNSMKDDPYLALSFLKRIEGNVTLPSVQAYATVIRIVCGWGLDKKLDTFLFELVRRGDEGRGFSVMDLLKAIGEMEQSLVLLIRVSTALVKAYANLDMFDEAIDIFFRAYYSLGRAPDIKALNFLISRMIASGRSDMVVGFFWEIERLGLDADAHTYVLVVQALWRNDDKEELEKLLSRLLISETRNPCVFYLNFIEGLCLNQMTDIAYFLLQPLRDANILVDKSDLGIAYRKVVRGLCYEMRIEDAESVVLDMEKHGIDPDVYVYSAIIEGHRKNMNIPKAVDVFNKMLKKRKRINCVIVSSILQCYCQMGNFSEAYDLFKEFRETNISLDRVCYNVAFDALGKLGKVEEAIELFREMTGKGIAPDVINYTTLIGGCCLQGKCSDAFDLMIEMDGTGKTPDIVIYNVLAGGLATNGLAQEAFETLKMMENRGVKPTYVTHNMVIEGLIDAGELDKAEAFYESLEHKSRENDASMVKGFCAAGCLDHAFERFIRLEFPLPKSVYFTLFTSLCAEKDYISKAQDLLDRMWKLGVEPEKSMYGKLIGAWCRVNNVRKAREFFEILVTKKIVPDLFTYTIMINTYCRLNEPKQAYALFEDMKRRDVKPDVVTYSVLLNSDPELDMKREMEAFDVIPDVVYYTIMINRYCHLNDLKKVYALFKDMKRREIVPDVVTYTVLLKNKPERNLSREMKAFDVKPDVFYYTVLIDWQCKIGDLGEAKRIFDQMIESGVDPDAAPYTALIACCCKMGYLKEAKMIFDRMIESGVKPDVVPYTALIAGCCRNGFVLKAVKLVKEMLEKGIKPTKASLSAVHYAKLKAKGLR.

PPR repeat units lie at residues 145–180, 181–215, 216–251, 253–285, 290–324, 325–359, 360–394, 395–429, 430–464, 465–499, 500–534, 537–561, 563–598, 599–633, 634–668, 697–731, 760–794, 795–829, and 830–864; these read LIRV…GRAP, DIKA…GLDA, DAHT…TRNP, VFYL…NILV, LGIA…GIDP, DVYV…RKRI, NCVI…NISL, DRVC…GIAP, DVIN…GKTP, DIVI…GVKP, TYVT…SREN, SMVK…LEFP, PKSV…GVEP, EKSM…KIVP, DLFT…DVKP, DVVY…EIVP, DVFY…GVDP, DAAP…GVKP, and DVVP…GIKP.

It belongs to the PPR family. P subfamily.

This Arabidopsis thaliana (Mouse-ear cress) protein is Putative pentatricopeptide repeat-containing protein At1g13800.